Reading from the N-terminus, the 317-residue chain is Transaldolase (317 aa).

Lysine 126 functions as the Schiff-base intermediate with substrate in the catalytic mechanism.

Belongs to the transaldolase family. Type 1 subfamily. Homodimer.

It localises to the cytoplasm. It carries out the reaction D-sedoheptulose 7-phosphate + D-glyceraldehyde 3-phosphate = D-erythrose 4-phosphate + beta-D-fructose 6-phosphate. It participates in carbohydrate degradation; pentose phosphate pathway; D-glyceraldehyde 3-phosphate and beta-D-fructose 6-phosphate from D-ribose 5-phosphate and D-xylulose 5-phosphate (non-oxidative stage): step 2/3. Functionally, transaldolase is important for the balance of metabolites in the pentose-phosphate pathway. The protein is Transaldolase of Paraburkholderia phytofirmans (strain DSM 17436 / LMG 22146 / PsJN) (Burkholderia phytofirmans).